The following is a 222-amino-acid chain: Eukaryotic translation initiation factor 3 subunit K (222 aa).

The region spanning 46-208 (YDLEANLAVL…KIKTKNITEK (163 aa)) is the PCI domain.

It belongs to the eIF-3 subunit K family. Component of the eukaryotic translation initiation factor 3 (eIF-3) complex. The eIF-3 complex interacts with pix.

The protein localises to the cytoplasm. Functionally, component of the eukaryotic translation initiation factor 3 (eIF-3) complex, which is involved in protein synthesis of a specialized repertoire of mRNAs and, together with other initiation factors, stimulates binding of mRNA and methionyl-tRNAi to the 40S ribosome. The eIF-3 complex specifically targets and initiates translation of a subset of mRNAs involved in cell proliferation. The chain is Eukaryotic translation initiation factor 3 subunit K from Drosophila willistoni (Fruit fly).